Consider the following 1070-residue polypeptide: RecBCD enzyme subunit RecC (1070 aa).

Belongs to the RecC family. Heterotrimer of RecB, RecC and RecD. All subunits contribute to DNA-binding.

Functionally, a helicase/nuclease that prepares dsDNA breaks (DSB) for recombinational DNA repair. Binds to DSBs and unwinds DNA via a highly rapid and processive ATP-dependent bidirectional helicase activity. Unwinds dsDNA until it encounters a Chi (crossover hotspot instigator) sequence from the 3' direction. Cuts ssDNA a few nucleotides 3' to the Chi site. The properties and activities of the enzyme are changed at Chi. The Chi-altered holoenzyme produces a long 3'-ssDNA overhang and facilitates RecA-binding to the ssDNA for homologous DNA recombination and repair. Holoenzyme degrades any linearized DNA that is unable to undergo homologous recombination. In the holoenzyme this subunit recognizes the wild-type Chi sequence, and when added to isolated RecB increases its ATP-dependent helicase processivity. This chain is RecBCD enzyme subunit RecC, found in Buchnera aphidicola subsp. Acyrthosiphon pisum (strain APS) (Acyrthosiphon pisum symbiotic bacterium).